We begin with the raw amino-acid sequence, 643 residues long: Type VI secretion system spike protein VgrG1a (643 aa).

Belongs to the VgrG protein family. As to quaternary structure, forms homotrimers. Part of the type VI secretion system (T6SS). Interacts with EagT6 and Tse6; these interactions are required for Tse6 loading onto VgrG1. Interacts with Hcp1.

It localises to the secreted. In terms of biological role, part of the H1 type VI secretion system (H1-T6SS) specialized secretion system, which delivers several virulence factors in both prokaryotic and eukaryotic cells during infection. Forms the spike at the tip of the elongating tube formed by haemolysin co-regulated protein 1/Hcp1. Allows the delivery of the Tse6 toxin to target cells where it exerts its toxicity. The sequence is that of Type VI secretion system spike protein VgrG1a from Pseudomonas aeruginosa (strain ATCC 15692 / DSM 22644 / CIP 104116 / JCM 14847 / LMG 12228 / 1C / PRS 101 / PAO1).